Reading from the N-terminus, the 255-residue chain is 4-hydroxy-tetrahydrodipicolinate reductase (255 aa).

NAD(+) contacts are provided by residues 9–14 (GFKGRM), 89–91 (GTT), and 115–118 (APNF). H145 serves as the catalytic Proton donor/acceptor. H146 is a binding site for (S)-2,3,4,5-tetrahydrodipicolinate. K149 functions as the Proton donor in the catalytic mechanism. Residue 155–156 (GT) coordinates (S)-2,3,4,5-tetrahydrodipicolinate.

Belongs to the DapB family.

The protein resides in the cytoplasm. It catalyses the reaction (S)-2,3,4,5-tetrahydrodipicolinate + NAD(+) + H2O = (2S,4S)-4-hydroxy-2,3,4,5-tetrahydrodipicolinate + NADH + H(+). It carries out the reaction (S)-2,3,4,5-tetrahydrodipicolinate + NADP(+) + H2O = (2S,4S)-4-hydroxy-2,3,4,5-tetrahydrodipicolinate + NADPH + H(+). It functions in the pathway amino-acid biosynthesis; L-lysine biosynthesis via DAP pathway; (S)-tetrahydrodipicolinate from L-aspartate: step 4/4. Functionally, catalyzes the conversion of 4-hydroxy-tetrahydrodipicolinate (HTPA) to tetrahydrodipicolinate. The chain is 4-hydroxy-tetrahydrodipicolinate reductase from Streptococcus thermophilus (strain CNRZ 1066).